We begin with the raw amino-acid sequence, 190 residues long: Crossover junction endodeoxyribonuclease RuvC (190 aa).

Active-site residues include Asp-7, Glu-67, and Asp-140. Mg(2+) is bound by residues Asp-7, Glu-67, and Asp-140.

Belongs to the RuvC family. In terms of assembly, homodimer which binds Holliday junction (HJ) DNA. The HJ becomes 2-fold symmetrical on binding to RuvC with unstacked arms; it has a different conformation from HJ DNA in complex with RuvA. In the full resolvosome a probable DNA-RuvA(4)-RuvB(12)-RuvC(2) complex forms which resolves the HJ. The cofactor is Mg(2+).

Its subcellular location is the cytoplasm. The enzyme catalyses Endonucleolytic cleavage at a junction such as a reciprocal single-stranded crossover between two homologous DNA duplexes (Holliday junction).. Functionally, the RuvA-RuvB-RuvC complex processes Holliday junction (HJ) DNA during genetic recombination and DNA repair. Endonuclease that resolves HJ intermediates. Cleaves cruciform DNA by making single-stranded nicks across the HJ at symmetrical positions within the homologous arms, yielding a 5'-phosphate and a 3'-hydroxyl group; requires a central core of homology in the junction. The consensus cleavage sequence is 5'-(A/T)TT(C/G)-3'. Cleavage occurs on the 3'-side of the TT dinucleotide at the point of strand exchange. HJ branch migration catalyzed by RuvA-RuvB allows RuvC to scan DNA until it finds its consensus sequence, where it cleaves and resolves the cruciform DNA. In Fusobacterium nucleatum subsp. nucleatum (strain ATCC 25586 / DSM 15643 / BCRC 10681 / CIP 101130 / JCM 8532 / KCTC 2640 / LMG 13131 / VPI 4355), this protein is Crossover junction endodeoxyribonuclease RuvC.